A 521-amino-acid polypeptide reads, in one-letter code: Cytochrome P450 1A1 (521 aa).

Phenylalanine 229 serves as a coordination point for substrate. Cysteine 463 serves as a coordination point for heme.

Belongs to the cytochrome P450 family. It depends on heme as a cofactor.

Its subcellular location is the endoplasmic reticulum membrane. The protein localises to the microsome membrane. It catalyses the reaction an organic molecule + reduced [NADPH--hemoprotein reductase] + O2 = an alcohol + oxidized [NADPH--hemoprotein reductase] + H2O + H(+). In terms of biological role, cytochromes P450 are a group of heme-thiolate monooxygenases. They oxidize a variety of structurally unrelated compounds, including steroids, fatty acids, and xenobiotics. The protein is Cytochrome P450 1A1 (cyp1a1) of Sparus aurata (Gilthead sea bream).